Here is a 620-residue protein sequence, read N- to C-terminus: Synchronized import protein 1 (620 aa).

The disordered stretch occupies residues 1 to 32 (MGRSKKRSRASSSRLNPLRKAGSNDNNKDTNV). 8 ARM repeats span residues 25-64 (DNNKDTNVVNKKLQPLLQNLSSVVPNDRSIALSSISVLCE), 66-106 (AHMR…NLSL), 181-221 (DDIL…TTLD), 258-299 (ANEL…NIDP), 340-386 (IKLQ…NFLP), 435-470 (DSQDDLSIKIGRMGCIWALLKLIFPDGAFESENRAL), 471-510 (INVQMLNNSGFARGIIEEFQNNNDLELQQKCINVLSTYAM), and 564-607 (RGGF…TLDS).

This sequence belongs to the nuclear import and ribosome assembly adapter family. As to quaternary structure, forms a heterotrimeric complex with RPL5 and RPL11A or RPL11B; interaction of this complex with KAP104 allows the nuclear import of the heterotrimer. Component of a hexameric 5S RNP precursor complex, composed of 5S RNA, RRS1, RPF2, RPL5, RPL11A/RPL11B and SYO1; this complex acts as a precursor for ribosome assembly.

It localises to the cytoplasm. The protein resides in the nucleus. Nuclear import adapter that specifically recruits the two functionally and topologically linked ribosomal proteins RPL5 and RPL11 (encoded by RPL11A and RPL11B). Guarantees that this cargo pair remains bound together from the time of synthesis in the cytoplasm until delivery to the nascent 5S rRNA in the nucleus. The chain is Synchronized import protein 1 (SYO1) from Saccharomyces cerevisiae (strain ATCC 204508 / S288c) (Baker's yeast).